The following is a 432-amino-acid chain: Polypyrimidine tract-binding protein homolog 3 (432 aa).

RRM domains are found at residues 6–80, 98–187, 245–319, and 355–429; these read KVVH…FSSH, NRIL…YNND, CTVL…FSKH, and KMIH…FSQL.

Its subcellular location is the nucleus. Functionally, plays a role in pre-mRNA splicing. Binds to the polypyrimidine tract of introns. May promote the binding of U2 snRNP to pre-mRNA. This chain is Polypyrimidine tract-binding protein homolog 3, found in Arabidopsis thaliana (Mouse-ear cress).